Reading from the N-terminus, the 426-residue chain is Gamma-glutamyl phosphate reductase (426 aa).

This sequence belongs to the gamma-glutamyl phosphate reductase family.

It localises to the cytoplasm. The enzyme catalyses L-glutamate 5-semialdehyde + phosphate + NADP(+) = L-glutamyl 5-phosphate + NADPH + H(+). It participates in amino-acid biosynthesis; L-proline biosynthesis; L-glutamate 5-semialdehyde from L-glutamate: step 2/2. Functionally, catalyzes the NADPH-dependent reduction of L-glutamate 5-phosphate into L-glutamate 5-semialdehyde and phosphate. The product spontaneously undergoes cyclization to form 1-pyrroline-5-carboxylate. This chain is Gamma-glutamyl phosphate reductase, found in Ralstonia nicotianae (strain ATCC BAA-1114 / GMI1000) (Ralstonia solanacearum).